Here is a 349-residue protein sequence, read N- to C-terminus: UDP-N-acetylenolpyruvoylglucosamine reductase (349 aa).

An FAD-binding PCMH-type domain is found at 25–197 (GIDARARYAA…VSVTFRLPKR (173 aa)). Residue Arg-173 is part of the active site. The active-site Proton donor is Ser-249. The active site involves Glu-345.

It belongs to the MurB family. FAD serves as cofactor.

It is found in the cytoplasm. The catalysed reaction is UDP-N-acetyl-alpha-D-muramate + NADP(+) = UDP-N-acetyl-3-O-(1-carboxyvinyl)-alpha-D-glucosamine + NADPH + H(+). Its pathway is cell wall biogenesis; peptidoglycan biosynthesis. Its function is as follows. Cell wall formation. The chain is UDP-N-acetylenolpyruvoylglucosamine reductase from Burkholderia multivorans (strain ATCC 17616 / 249).